We begin with the raw amino-acid sequence, 68 residues long: Large ribosomal subunit protein bL32 (68 aa).

The protein belongs to the bacterial ribosomal protein bL32 family.

The sequence is that of Large ribosomal subunit protein bL32 from Onion yellows phytoplasma (strain OY-M).